A 591-amino-acid chain; its full sequence is MHRYRTHTCGALRDSHIDQTVRLSGWCHRIRDHGGVLFIDLRDHYGLTQCVADPDSPAFKDAEKLRAEWVVRIDGKVRRRPEGTDNPDLPTGAVEVFVTEIEVLGPAGELPLPVFGEQEYPEDVRLRYRFLDLRREKLHQNIMTRGAIVDSMRRRMKEQGFFEFQTPILTASSPEGARDFLVPSRIHPGKFYALPQAPQQYKQLLMMSGFDRYFQIAPCFRDEDPRADRLPGEFYQLDVEMSFVTQDDIFAAMEPVITGVFEEFAKGKRVTKGWPRIAFADSMRKYGTDKPDLRNPIEMQDVSEHFRGSGFKVFARMLEEQRNQVWAIPGPGGGSRAFCDRMNSWAQGEGQPGLGYIMWREGGEGAGPLANNIGPERTEAIRTALGLKAGDAAFFVAGDPSKFVKFAGLARTKVGEELNLIDKDQFALAWVVDFPMYEYNEDDKKVDFSHNPFSMPQGGMEALTSQDPLTIKAFQYDITCNGYEIASGGIRNHRPEAMVKAFEIAGYGEQEVVDRFGGMYRAFQYGAPPHGGMAAGVDRIVMLLCGTTNLREISLFPMNQRAEDLLMGAPSEVSPKQLRELHIRLNLPDTK.

Glutamate 175 contacts L-aspartate. Residues 199–202 (QQYK) are aspartate. The L-aspartate site is built by arginine 221 and histidine 450. 221–223 (RDE) is a binding site for ATP. An ATP-binding site is contributed by glutamate 484. Arginine 491 contributes to the L-aspartate binding site. Position 536–539 (536–539 (GVDR)) interacts with ATP.

The protein belongs to the class-II aminoacyl-tRNA synthetase family. Type 1 subfamily. In terms of assembly, homodimer.

Its subcellular location is the cytoplasm. It catalyses the reaction tRNA(Asx) + L-aspartate + ATP = L-aspartyl-tRNA(Asx) + AMP + diphosphate. Aspartyl-tRNA synthetase with relaxed tRNA specificity since it is able to aspartylate not only its cognate tRNA(Asp) but also tRNA(Asn). Reaction proceeds in two steps: L-aspartate is first activated by ATP to form Asp-AMP and then transferred to the acceptor end of tRNA(Asp/Asn). This Rhodopseudomonas palustris (strain TIE-1) protein is Aspartate--tRNA(Asp/Asn) ligase.